A 123-amino-acid polypeptide reads, in one-letter code: Holo-[acyl-carrier-protein] synthase (123 aa).

The Mg(2+) site is built by Asp8 and Glu60.

This sequence belongs to the P-Pant transferase superfamily. AcpS family. It depends on Mg(2+) as a cofactor.

The protein localises to the cytoplasm. The catalysed reaction is apo-[ACP] + CoA = holo-[ACP] + adenosine 3',5'-bisphosphate + H(+). In terms of biological role, transfers the 4'-phosphopantetheine moiety from coenzyme A to a Ser of acyl-carrier-protein. The sequence is that of Holo-[acyl-carrier-protein] synthase from Ehrlichia chaffeensis (strain ATCC CRL-10679 / Arkansas).